A 294-amino-acid chain; its full sequence is 33 kDa chaperonin (294 aa).

2 disulfide bridges follow: Cys-236/Cys-238 and Cys-269/Cys-272.

It belongs to the HSP33 family. Post-translationally, under oxidizing conditions two disulfide bonds are formed involving the reactive cysteines. Under reducing conditions zinc is bound to the reactive cysteines and the protein is inactive.

It is found in the cytoplasm. Its function is as follows. Redox regulated molecular chaperone. Protects both thermally unfolding and oxidatively damaged proteins from irreversible aggregation. Plays an important role in the bacterial defense system toward oxidative stress. This Desulforamulus reducens (strain ATCC BAA-1160 / DSM 100696 / MI-1) (Desulfotomaculum reducens) protein is 33 kDa chaperonin.